Reading from the N-terminus, the 142-residue chain is Interleukin-3 (142 aa).

An N-terminal signal peptide occupies residues Met-1–Gln-18. Asn-33, Asn-88, and Asn-108 each carry an N-linked (GlcNAc...) asparagine glycan. The cysteines at positions 34 and 102 are disulfide-linked.

The protein belongs to the IL-3 family. Monomer. In terms of tissue distribution, activated T-cells, mast cells, natural killer cells.

It is found in the secreted. Granulocyte/macrophage colony-stimulating factors are cytokines that act in hematopoiesis by controlling the production, differentiation, and function of 2 related white cell populations of the blood, the granulocytes and the monocytes-macrophages. In terms of biological role, this CSF induces granulocytes, macrophages, mast cells, stem cells, erythroid cells, eosinophils and megakaryocytes. The sequence is that of Interleukin-3 (IL3) from Saguinus oedipus (Cotton-top tamarin).